We begin with the raw amino-acid sequence, 380 residues long: Tryptophan 2,3-dioxygenase (380 aa).

Residues 57 to 61 (FIITH) and arginine 128 each bind substrate. Residue histidine 313 participates in heme binding. Threonine 328 provides a ligand contact to substrate.

It belongs to the tryptophan 2,3-dioxygenase family. Homotetramer. Dimer of dimers. It depends on heme as a cofactor.

It catalyses the reaction L-tryptophan + O2 = N-formyl-L-kynurenine. It participates in amino-acid degradation; L-tryptophan degradation via kynurenine pathway; L-kynurenine from L-tryptophan: step 1/2. Its pathway is pigment biosynthesis; ommochrome biosynthesis. In terms of biological role, heme-dependent dioxygenase that catalyzes the oxidative cleavage of the L-tryptophan (L-Trp) pyrrole ring and converts L-tryptophan to N-formyl-L-kynurenine. Catalyzes the oxidative cleavage of the indole moiety. The polypeptide is Tryptophan 2,3-dioxygenase (Drosophila ananassae (Fruit fly)).